A 147-amino-acid polypeptide reads, in one-letter code: RxLR effector protein Avr3a (147 aa).

A signal peptide spans 1 to 21 (MRLAIMLSATAVAINFATCSA). A RxLR-dEER motif is present at residues 44–59 (RLLRKNEENEETSEER). N6-acetyllysine is present on Lys48. An effector domain region spans residues 77-147 (ALTKRADAKK…YMMHLGLTGY (71 aa)).

The protein belongs to the RxLR effector family. Forms homodimers via the RxLR-dEER motif. Interacts with host E3 ligase CMPG1. Interacts with host DRP2. Proteolytically cleaved. The cleavage site directly after the RxLR sequence and the high conservation among other effector proteins suggest that the RxLR motif might play a crucial role in the intracellular processing before secretion. In terms of processing, glycosylated. Post-translationally, N-acetylated at Lys-48 after cleavage.

The protein resides in the secreted. The protein localises to the host cytoplasm. It is found in the host endosome. In terms of biological role, multifunctional effector that can suppress host BAK1/SERK3-mediated immunity through at least two different pathways. Manipulates plant immunity by targeting and stabilizing host E3 ligase CMPG1. Preventing the normal 26S proteasome-dependent degradation of potato CMPG1, and thus potentially of its protein substrates in the host cell, further abolishes host cell death during the biotrophic phase of infection. Also associates with the dynamin-related protein 2 (DRP2), a plant GTPase involved in immune receptor-mediated endocytosis. The Avr3A(KI) form is recognized by R3a which triggers R3a-mediated hypersensitivity and suppresses INF1-induced cell death. This Phytophthora infestans (Potato late blight agent) protein is RxLR effector protein Avr3a.